The following is a 343-amino-acid chain: 3-isopropylmalate dehydrogenase (343 aa).

Substrate contacts are provided by Arg-94, Arg-104, Arg-128, and Asp-218. Mg(2+) is bound by residues Asp-218, Asp-242, and Asp-246. 278-290 lines the NAD(+) pocket; it reads GSAPDIAGQNKAN.

The protein belongs to the isocitrate and isopropylmalate dehydrogenases family. LeuB type 2 subfamily. In terms of assembly, homodimer. It depends on Mg(2+) as a cofactor. Requires Mn(2+) as cofactor.

The protein localises to the cytoplasm. It carries out the reaction (2R,3S)-3-isopropylmalate + NAD(+) = 4-methyl-2-oxopentanoate + CO2 + NADH. The protein operates within amino-acid biosynthesis; L-leucine biosynthesis; L-leucine from 3-methyl-2-oxobutanoate: step 3/4. Functionally, catalyzes the oxidation of 3-carboxy-2-hydroxy-4-methylpentanoate (3-isopropylmalate) to 3-carboxy-4-methyl-2-oxopentanoate. The product decarboxylates to 4-methyl-2 oxopentanoate. This is 3-isopropylmalate dehydrogenase from Bifidobacterium longum (strain DJO10A).